Consider the following 231-residue polypeptide: 5'-methylthioadenosine/S-adenosylhomocysteine nucleosidase (231 aa).

The active-site Proton acceptor is the glutamate 12. Residues glycine 78, isoleucine 153, and methionine 174–glutamate 175 contribute to the substrate site. Aspartate 198 functions as the Proton donor in the catalytic mechanism.

Belongs to the PNP/UDP phosphorylase family. MtnN subfamily.

It catalyses the reaction S-adenosyl-L-homocysteine + H2O = S-(5-deoxy-D-ribos-5-yl)-L-homocysteine + adenine. It carries out the reaction S-methyl-5'-thioadenosine + H2O = 5-(methylsulfanyl)-D-ribose + adenine. The enzyme catalyses 5'-deoxyadenosine + H2O = 5-deoxy-D-ribose + adenine. It functions in the pathway amino-acid biosynthesis; L-methionine biosynthesis via salvage pathway; S-methyl-5-thio-alpha-D-ribose 1-phosphate from S-methyl-5'-thioadenosine (hydrolase route): step 1/2. Functionally, catalyzes the irreversible cleavage of the glycosidic bond in both 5'-methylthioadenosine (MTA) and S-adenosylhomocysteine (SAH/AdoHcy) to adenine and the corresponding thioribose, 5'-methylthioribose and S-ribosylhomocysteine, respectively. Also cleaves 5'-deoxyadenosine, a toxic by-product of radical S-adenosylmethionine (SAM) enzymes, into 5-deoxyribose and adenine. This is 5'-methylthioadenosine/S-adenosylhomocysteine nucleosidase from Maridesulfovibrio salexigens (strain ATCC 14822 / DSM 2638 / NCIMB 8403 / VKM B-1763) (Desulfovibrio salexigens).